Reading from the N-terminus, the 218-residue chain is Small ribosomal subunit protein uS3 (218 aa).

The KH type-2 domain maps to 38 to 106 (IREFISKRLS…RVHINILEIK (69 aa)).

This sequence belongs to the universal ribosomal protein uS3 family. In terms of assembly, part of the 30S ribosomal subunit. Forms a tight complex with proteins S10 and S14.

In terms of biological role, binds the lower part of the 30S subunit head. Binds mRNA in the 70S ribosome, positioning it for translation. This chain is Small ribosomal subunit protein uS3, found in Bacillus pumilus (strain SAFR-032).